Reading from the N-terminus, the 408-residue chain is Protein ZNF365 (408 aa).

Ser-16 bears the Phosphoserine mark. The C2H2-type; degenerate zinc-finger motif lies at 26 to 51 (FRCPRCGDHTRFRSLSSLRAHLEFSH). Residues Ser-139 and Ser-146 each carry the phosphoserine modification. The stretch at 170 to 298 (VEAVDRTIEK…QLEYYQSQQA (129 aa)) forms a coiled coil. At Thr-176 the chain carries Phosphothreonine. Ser-370 carries the post-translational modification Phosphoserine.

Homodimer. Interacts with NDE1 and NDEL1. Interacts with DISC1. Interacts with PARP1. Interacts with MCRS1. In terms of tissue distribution, detected in several tissues, with highest levels in brain. Also expressed during embryonic development. Expressed in cerebral cortex, hippocampus, striatum, inferior colliculus and thalamus.

Its subcellular location is the cytoplasm. It localises to the cytoskeleton. The protein resides in the microtubule organizing center. The protein localises to the centrosome. Functionally, contributes to genomic stability by preventing telomere dysfunction. Involved in the morphogenesis of basket cells in the somatosensory cortex during embryogenesis. Involved in the positive regulation of oligodendrocyte differentiation during postnatal growth. Involved in dendritic arborization, morphogenesis of spine density dendrite, and establishment of postsynaptic dendrite density in cortical pyramidal neurons. Involved in the regulation of neurogenesis. Negatively regulates neurite outgrowth. Involved in homologous recombination (HR) repair pathway. Required for proper resolution of DNA double-strand breaks (DSBs) by HR. Is required for recovery of stalled replication forks, and directly contributes to genomic stability. Interacts with PARP1 and mediates MRE11-dependent DNA end resection during replication fork recovery. This chain is Protein ZNF365 (Znf365), found in Mus musculus (Mouse).